A 411-amino-acid chain; its full sequence is MLTNLRLVTLSSETSADNNGYQIIEDGMVGITNGKIMFVGSVSDSPLACHNDLHGHPDVIDCGNALVTPGLIDCHTHLVFAGNRANEFEQRLNGMPYEEMAKRGGGIISTVQATREATEDELYQLAIKRLNGLKRDGVTTIEIKSGYGLTLDDELKMLRVARRIGDMPDIKVSTTLLAAHAVPPEYKNRADDYIEYVCQHIIPAAVEQGLADYVDVFCEGIGFSTQQCQRVFETAKHYGLGIKGHTEQLSNLGGSALAARMGATSVDHIEHLDHDGVAALAANNTVATLLPGAYYFLRETQRPPIEHLRKLQVPMAISTDFNPGTSPIASLRTMMNMACTFFRLTPEECLRGVTCNAAQALGLEASRGKISVGMEADLALWDIDTPAELSYRLGVPDLVARIVDGELFYAK.

Fe(3+)-binding residues include His75 and His77. Positions 75 and 77 each coordinate Zn(2+). Positions 84, 147, and 180 each coordinate 4-imidazolone-5-propanoate. Tyr147 is an N-formimidoyl-L-glutamate binding site. His245 serves as a coordination point for Fe(3+). A Zn(2+)-binding site is contributed by His245. Gln248 provides a ligand contact to 4-imidazolone-5-propanoate. Fe(3+) is bound at residue Asp320. Asp320 provides a ligand contact to Zn(2+). Residues Asn322 and Gly324 each contribute to the N-formimidoyl-L-glutamate site. Thr325 is a binding site for 4-imidazolone-5-propanoate.

The protein belongs to the metallo-dependent hydrolases superfamily. HutI family. Zn(2+) is required as a cofactor. It depends on Fe(3+) as a cofactor.

The protein resides in the cytoplasm. It catalyses the reaction 4-imidazolone-5-propanoate + H2O = N-formimidoyl-L-glutamate. Its pathway is amino-acid degradation; L-histidine degradation into L-glutamate; N-formimidoyl-L-glutamate from L-histidine: step 3/3. Its function is as follows. Catalyzes the hydrolytic cleavage of the carbon-nitrogen bond in imidazolone-5-propanoate to yield N-formimidoyl-L-glutamate. It is the third step in the universal histidine degradation pathway. This is Imidazolonepropionase from Photobacterium profundum (strain SS9).